The chain runs to 237 residues: Cytosolic-abundant heat soluble protein 1 (237 aa).

Basic and acidic residues-rich tracts occupy residues 1–17 (MPYE…KTEQ) and 91–105 (VDMR…EARR). 2 disordered regions span residues 1–35 (MPYE…VARE) and 85–105 (SGAS…EARR). Residues 98–201 (KLAEEARRDA…KEALERSRMA (104 aa)) are a coiled coil. 2 CAHS motif regions span residues 132–150 (YRHQ…LEKQ) and 169–187 (QKRE…LDRE). The segment at 212 to 237 (AGHTVSGGTTVSSVDKVETVRERKHH) is disordered. A compositionally biased stretch (basic and acidic residues) spans 226 to 237 (DKVETVRERKHH).

This sequence belongs to the Cytosolic-abundant heat soluble protein (CAHS) family.

The protein localises to the cytoplasm. It localises to the nucleus. Functionally, CAHS proteins are cytosolic heat soluble proteins that seem to contribute to the anhydrobiosis in tardigrades, but their specific mechanisms are yet to be identified. It is possible that protection during anhydrobiosis might occur via the stabilization of vitrifying small molecules such as sugars, but not via the direct glass transition of CAHS proteins themselves. The sequence is that of Cytosolic-abundant heat soluble protein 1 from Ramazzottius varieornatus (Water bear).